A 144-amino-acid chain; its full sequence is Large ribosomal subunit protein uL13 (144 aa).

It belongs to the universal ribosomal protein uL13 family. In terms of assembly, part of the 50S ribosomal subunit.

In terms of biological role, this protein is one of the early assembly proteins of the 50S ribosomal subunit, although it is not seen to bind rRNA by itself. It is important during the early stages of 50S assembly. This is Large ribosomal subunit protein uL13 from Legionella pneumophila (strain Paris).